The following is a 542-amino-acid chain: CTP synthase (542 aa).

Residues Met-1 to Ile-265 form an amidoligase domain region. Residue Ser-13 coordinates CTP. Ser-13 provides a ligand contact to UTP. Ser-14–Ile-19 contributes to the ATP binding site. Tyr-54 lines the L-glutamine pocket. Asp-71 contributes to the ATP binding site. Asp-71 and Glu-139 together coordinate Mg(2+). CTP-binding positions include Asp-146–Glu-148, Lys-186–Gln-191, and Lys-222. Residues Lys-186–Gln-191 and Lys-222 contribute to the UTP site. Positions Thr-291–Leu-541 constitute a Glutamine amidotransferase type-1 domain. Gly-353 contacts L-glutamine. Cys-380 serves as the catalytic Nucleophile; for glutamine hydrolysis. Residues Phe-381–Gln-384, Glu-404, and Arg-469 each bind L-glutamine. Active-site residues include His-514 and Glu-516.

It belongs to the CTP synthase family. In terms of assembly, homotetramer.

It carries out the reaction UTP + L-glutamine + ATP + H2O = CTP + L-glutamate + ADP + phosphate + 2 H(+). It catalyses the reaction L-glutamine + H2O = L-glutamate + NH4(+). The enzyme catalyses UTP + NH4(+) + ATP = CTP + ADP + phosphate + 2 H(+). The protein operates within pyrimidine metabolism; CTP biosynthesis via de novo pathway; CTP from UDP: step 2/2. With respect to regulation, allosterically activated by GTP, when glutamine is the substrate; GTP has no effect on the reaction when ammonia is the substrate. The allosteric effector GTP functions by stabilizing the protein conformation that binds the tetrahedral intermediate(s) formed during glutamine hydrolysis. Inhibited by the product CTP, via allosteric rather than competitive inhibition. In terms of biological role, catalyzes the ATP-dependent amination of UTP to CTP with either L-glutamine or ammonia as the source of nitrogen. Regulates intracellular CTP levels through interactions with the four ribonucleotide triphosphates. This chain is CTP synthase, found in Brucella melitensis biotype 2 (strain ATCC 23457).